Consider the following 510-residue polypeptide: NAD(P)H-quinone oxidoreductase subunit 2 B, chloroplastic (510 aa).

13 consecutive transmembrane segments (helical) span residues 24–44, 57–77, 99–119, 124–144, 149–169, 183–203, 227–247, 295–315, 323–343, 347–367, 395–415, 418–438, and 484–504; these read LLLF…GLIL, IPWL…ALLF, IFQF…VEYI, MAIT…MFLC, LITI…LSGY, YLLM…WLYG, PGIS…LSPA, WHLH…LIAI, MLAY…IVGD, GYAS…GTFA, ALSL…AGFF, LHLF…IGLL, and MIVC…IIAI.

The protein belongs to the complex I subunit 2 family. As to quaternary structure, NDH is composed of at least 16 different subunits, 5 of which are encoded in the nucleus.

It localises to the plastid. The protein resides in the chloroplast thylakoid membrane. It carries out the reaction a plastoquinone + NADH + (n+1) H(+)(in) = a plastoquinol + NAD(+) + n H(+)(out). It catalyses the reaction a plastoquinone + NADPH + (n+1) H(+)(in) = a plastoquinol + NADP(+) + n H(+)(out). Functionally, NDH shuttles electrons from NAD(P)H:plastoquinone, via FMN and iron-sulfur (Fe-S) centers, to quinones in the photosynthetic chain and possibly in a chloroplast respiratory chain. The immediate electron acceptor for the enzyme in this species is believed to be plastoquinone. Couples the redox reaction to proton translocation, and thus conserves the redox energy in a proton gradient. The sequence is that of NAD(P)H-quinone oxidoreductase subunit 2 B, chloroplastic from Buxus microphylla (Littleleaf boxwood).